A 650-amino-acid chain; its full sequence is Acetyl-coenzyme A synthetase (650 aa).

CoA contacts are provided by residues 191–194 (RGGR), Thr311, and Asn335. ATP contacts are provided by residues 387–389 (GEP), 411–416 (DTWWQT), Asp500, and Arg515. Ser523 contacts CoA. An ATP-binding site is contributed by Arg526. Mg(2+) contacts are provided by Val537, His539, and Val542. Arg584 lines the CoA pocket. Lys609 bears the N6-acetyllysine mark.

This sequence belongs to the ATP-dependent AMP-binding enzyme family. The cofactor is Mg(2+). In terms of processing, acetylated. Deacetylation by the SIR2-homolog deacetylase activates the enzyme.

The catalysed reaction is acetate + ATP + CoA = acetyl-CoA + AMP + diphosphate. Its function is as follows. Catalyzes the conversion of acetate into acetyl-CoA (AcCoA), an essential intermediate at the junction of anabolic and catabolic pathways. AcsA undergoes a two-step reaction. In the first half reaction, AcsA combines acetate with ATP to form acetyl-adenylate (AcAMP) intermediate. In the second half reaction, it can then transfer the acetyl group from AcAMP to the sulfhydryl group of CoA, forming the product AcCoA. The chain is Acetyl-coenzyme A synthetase from Shewanella oneidensis (strain ATCC 700550 / JCM 31522 / CIP 106686 / LMG 19005 / NCIMB 14063 / MR-1).